Reading from the N-terminus, the 517-residue chain is Endoglycoceramidase (517 aa).

Positions Met-1–Gly-17 are cleaved as a signal peptide. A glycan (N-linked (GlcNAc...) asparagine) is linked at Asn-99. Glu-230 functions as the Proton donor in the catalytic mechanism. Asn-298, Asn-380, and Asn-393 each carry an N-linked (GlcNAc...) asparagine glycan.

The protein belongs to the glycosyl hydrolase 5 (cellulase A) family. As to expression, expressed uniformly in digestive cells, tentacles and peduncle regions suggesting expression in the endoderm throughout the whole body (at protein level).

Its subcellular location is the secreted. It carries out the reaction an oligoglycosyl-(1-&gt;4)-beta-D-glucosyl-(1&lt;-&gt;1)-ceramide + H2O = an oligoglycosyl-(1-&gt;4)-D-glucose + an N-acyl-sphingoid base. Cu(2+), zinc, manganese, calcium, magnesium and EDTA have no significant effects on enzyme activity. Enzyme requires presence of detergents such as Triton X-100 and Lubrol PX for the hydrolysis of glycosphingolipids. Taurodeoxycholate strongly inhibits the enzyme activity. Functionally, hydrolysis of the glycosidic linkage between oligosaccharides and ceramides of glycosphingolipids, optimal substrates appear to be the glycosphingolipids with a gangliotetraose structure. The polypeptide is Endoglycoceramidase (Hydra vulgaris (Hydra)).